The chain runs to 105 residues: Large ribosomal subunit protein uL24 (105 aa).

This sequence belongs to the universal ribosomal protein uL24 family. In terms of assembly, part of the 50S ribosomal subunit.

Its function is as follows. One of two assembly initiator proteins, it binds directly to the 5'-end of the 23S rRNA, where it nucleates assembly of the 50S subunit. In terms of biological role, one of the proteins that surrounds the polypeptide exit tunnel on the outside of the subunit. The chain is Large ribosomal subunit protein uL24 from Novosphingobium aromaticivorans (strain ATCC 700278 / DSM 12444 / CCUG 56034 / CIP 105152 / NBRC 16084 / F199).